The primary structure comprises 204 residues: Probable chorismate pyruvate-lyase (204 aa).

Substrate is bound by residues Arg75, Leu113, and Glu160.

Belongs to the UbiC family.

It localises to the cytoplasm. The catalysed reaction is chorismate = 4-hydroxybenzoate + pyruvate. Its pathway is cofactor biosynthesis; ubiquinone biosynthesis. In terms of biological role, removes the pyruvyl group from chorismate, with concomitant aromatization of the ring, to provide 4-hydroxybenzoate (4HB) for the ubiquinone pathway. The sequence is that of Probable chorismate pyruvate-lyase from Alcanivorax borkumensis (strain ATCC 700651 / DSM 11573 / NCIMB 13689 / SK2).